The chain runs to 324 residues: [Acyl-carrier-protein] phosphodiesterase PptH (324 aa).

Residues D22, H24, and D51 each contribute to the Mn(2+) site. Fe cation-binding residues include D51, N79, H205, and H246. H248 lines the Mn(2+) pocket.

This sequence belongs to the metallophosphoesterase superfamily. It depends on Fe(3+) as a cofactor. Mn(2+) is required as a cofactor.

The catalysed reaction is holo-[ACP] + H2O = apo-[ACP] + (R)-4'-phosphopantetheine + H(+). Its function is as follows. Catalyzes the hydrolysis of the phosphopantetheine group from substrate holo-carrier proteins. The polypeptide is [Acyl-carrier-protein] phosphodiesterase PptH (Mycobacterium tuberculosis (strain ATCC 25618 / H37Rv)).